Here is a 296-residue protein sequence, read N- to C-terminus: GTPase Era (296 aa).

The region spanning 3–170 is the Era-type G domain; that stretch reads KSGFVTIVGR…KELMFKYIPE (168 aa). Positions 11–18 are G1; that stretch reads GRPNVGKS. A GTP-binding site is contributed by 11–18; that stretch reads GRPNVGKS. The tract at residues 37-41 is G2; it reads QTTRN. Positions 58-61 are G3; the sequence is DTPG. GTP-binding positions include 58-62 and 120-123; these read DTPGI and NKID. Positions 120–123 are G4; that stretch reads NKID. The tract at residues 149-151 is G5; the sequence is ISA. Residues 201–278 form the KH type-2 domain; the sequence is LSEEVPHGIA…YIRLWVKVKE (78 aa).

The protein belongs to the TRAFAC class TrmE-Era-EngA-EngB-Septin-like GTPase superfamily. Era GTPase family. Monomer.

The protein resides in the cytoplasm. The protein localises to the cell membrane. Its function is as follows. An essential GTPase that binds both GDP and GTP, with rapid nucleotide exchange. Plays a role in 16S rRNA processing and 30S ribosomal subunit biogenesis and possibly also in cell cycle regulation and energy metabolism. In Clostridium botulinum (strain Okra / Type B1), this protein is GTPase Era.